Consider the following 122-residue polypeptide: Putative cryptic phosphonate transport system permease protein PhnE2 (122 aa).

The ABC transmembrane type-1 domain occupies Met-1–Ser-114. 4 helical membrane-spanning segments follow: residues Ala-3–Ile-23, Leu-39–Leu-59, Ser-68–Ile-88, and Phe-93–Leu-113.

This sequence belongs to the binding-protein-dependent transport system permease family. As to quaternary structure, if the reading frame is restored, the complex is composed of two ATP-binding proteins (PhnC), two transmembrane proteins (PhnE) and a solute-binding protein (PhnD).

The protein resides in the cell inner membrane. Its function is as follows. C-terminal fragment of the PhnE protein, part of a phosphonate usage operon that is cryptic in K12 strains. Growth of K12 strains on phosphonate can be observed when it is used as the sole phosphorus source after a 60 hour lag period, suggesting the operon is activated. An intact PhnE in strain B is (AC A0A140NFA3). Part of the binding-protein-dependent transport system for phosphonates; probably responsible for the translocation of the substrate across the membrane. The chain is Putative cryptic phosphonate transport system permease protein PhnE2 (phnE) from Escherichia coli (strain K12).